Here is a 120-residue protein sequence, read N- to C-terminus: Large ribosomal subunit protein uL18 (120 aa).

It belongs to the universal ribosomal protein uL18 family. As to quaternary structure, part of the 50S ribosomal subunit; part of the 5S rRNA/L5/L18/L25 subcomplex. Contacts the 5S and 23S rRNAs.

Its function is as follows. This is one of the proteins that bind and probably mediate the attachment of the 5S RNA into the large ribosomal subunit, where it forms part of the central protuberance. The chain is Large ribosomal subunit protein uL18 from Rhizobium etli (strain CIAT 652).